Consider the following 318-residue polypeptide: Mitochondrial thiamine pyrophosphate carrier (318 aa).

Solcar repeat units follow at residues 13–106, 116–202, and 214–309; these read NSKL…LTEL, HQFS…LKRA, and TGNL…FCNL. The next 6 membrane-spanning stretches (helical) occupy residues 19–39, 87–107, 122–142, 173–193, 220–240, and 293–313; these read AVAGSVSGFVTRALISPLDVI, ILSIGYGAVQFLAFEELTELL, FVCGGLSAGTATLTVHPVDVL, VFYKGLTPTVIAIFPYAGLQF, LLCGCGSGVISKTLTYPLDLF, and ALSTGFMFFWYELFCNLFHCI.

This sequence belongs to the mitochondrial carrier (TC 2.A.29) family.

The protein localises to the mitochondrion membrane. The enzyme catalyses thiamine phosphate(out) + thiamine diphosphate(in) = thiamine phosphate(in) + thiamine diphosphate(out). Functionally, mitochondrial transporter mediating uptake of thiamine diphosphate into mitochondria. It is not clear if the antiporter activity is affected by the membrane potential or by the proton electrochemical gradient. This Rattus norvegicus (Rat) protein is Mitochondrial thiamine pyrophosphate carrier (Slc25a19).